We begin with the raw amino-acid sequence, 443 residues long: Transcriptional adapter 2-alpha (443 aa).

Position 6 is a phosphoserine (Ser6). The segment at 12–69 adopts a ZZ-type zinc-finger fold; the sequence is SDKPPCRGCSSYLTEPYIKCAECGPPPFFLCLQCFTRGFEYKKHQSDHTYEIMTSDFP. Residues Cys17, Cys20, Cys31, Cys34, Cys42, Cys45, His55, and His59 each coordinate Zn(2+). The 53-residue stretch at 70 to 122 folds into the SANT domain; sequence VLDPSWTAQEEMALLEAVMDCGFGNWQDVANQMCTKTKEECEKHYMKHFINNP. Glycyl lysine isopeptide (Lys-Gly) (interchain with G-Cter in SUMO2) cross-links involve residues Lys132 and Lys138. One can recognise an SWIRM domain in the interval 356–443; the sequence is NSGRRSAPPL…LIREGYITKA (88 aa). The DNA-binding element occupies 426–435; sequence KTRKIYDFLI.

Interacts with GCN5. Interacts with NR3C1. Associated with the P/CAF protein in the PCAF complex. Component of the PCAF complex, at least composed of TADA2L/ADA2, TADA3L/ADA3, TAF5L/PAF65-beta, TAF6L/PAF65-alpha, TAF10/TAFII30, TAF12/TAFII20, TAF9/TAFII31 and TRRAP. Component of the ADA2A-containing complex (ATAC), composed of KAT14, KAT2A, TADA2L, TADA3L, ZZ3, MBIP, WDR5, YEATS2, CCDC101 and DR1. Interacts with CCDC134.

It localises to the nucleus. The protein localises to the chromosome. Its function is as follows. Component of the ATAC complex, a complex with histone acetyltransferase activity on histones H3 and H4. Required for the function of some acidic activation domains, which activate transcription from a distant site. Binds double-stranded DNA. Binds dinucleosomes, probably at the linker region between neighboring nucleosomes. Plays a role in chromatin remodeling. May promote TP53/p53 'Lys-321' acetylation, leading to reduced TP53 stability and transcriptional activity. May also promote XRCC6 acetylation thus facilitating cell apoptosis in response to DNA damage. This is Transcriptional adapter 2-alpha (Tada2a) from Mus musculus (Mouse).